A 192-amino-acid chain; its full sequence is Anthrone oxygenase (192 aa).

The next 3 helical transmembrane spans lie at Ile-12–Val-32, Gly-54–Ala-74, and Ala-86–Ser-106. N-linked (GlcNAc...) asparagine glycosylation is found at Asn-130, Asn-138, and Asn-147. Residues Met-172–Val-192 traverse the membrane as a helical segment.

This sequence belongs to the anthrone oxygenase family.

It is found in the membrane. It catalyses the reaction emodin anthrone + O2 = emodin + H2O + H(+). Its pathway is secondary metabolite biosynthesis. Anthrone oxygenase; part of the gene cluster that mediates the biosynthesis of monodictyphenone, a prenyl xanthone derivative. The pathway begins with the synthesis of atrochrysone thioester by the polyketide synthase (PKS) mdpG. The atrochrysone carboxyl ACP thioesterase mdpF then breaks the thioester bond and releases the atrochrysone carboxylic acid from mdpG. The atrochrysone carboxylic acid is then converted to atrochrysone which is further transformed into emodin anthrone by mdpH-1 and mdpH-2. Emodin is further modified to yield monodictyphenone via several steps involving mdpB, mdpC mdpJ, mdpK and mdpL. These enzymes with xptA, xptB and xptC are also proposed to be involved in the synthesis of shamixanthone from emodin. Especially, direct reduction of emodin by the short chain dehydrogenase mdpC followed by dehydration catalyzed by the scytalone dehydratase-like protein mdpB gives loss of oxygen and formation of chrysophanol intermediate in two simple steps. In Emericella nidulans (strain FGSC A4 / ATCC 38163 / CBS 112.46 / NRRL 194 / M139) (Aspergillus nidulans), this protein is Anthrone oxygenase.